The following is a 288-amino-acid chain: Oxaloacetate decarboxylase (288 aa).

Residue S47 participates in substrate binding. D85 provides a ligand contact to Mg(2+). Substrate-binding residues include R156 and H232.

Belongs to the isocitrate lyase/PEP mutase superfamily. Oxaloacetate decarboxylase family. Homotetramer; dimer of dimers. It depends on Mg(2+) as a cofactor.

It carries out the reaction oxaloacetate + H(+) = pyruvate + CO2. Catalyzes the decarboxylation of oxaloacetate into pyruvate. Seems to play a role in maintaining cellular concentrations of bicarbonate and pyruvate. The polypeptide is Oxaloacetate decarboxylase (Bradyrhizobium sp. (strain BTAi1 / ATCC BAA-1182)).